The following is a 261-amino-acid chain: Pyridoxine 5'-phosphate synthase (261 aa).

Asn6 lines the 3-amino-2-oxopropyl phosphate pocket. 8–9 (DH) contacts 1-deoxy-D-xylulose 5-phosphate. Arg17 serves as a coordination point for 3-amino-2-oxopropyl phosphate. His42 (proton acceptor) is an active-site residue. The 1-deoxy-D-xylulose 5-phosphate site is built by Arg44 and His49. Glu69 serves as the catalytic Proton acceptor. Residue Thr99 participates in 1-deoxy-D-xylulose 5-phosphate binding. Catalysis depends on His213, which acts as the Proton donor. 3-amino-2-oxopropyl phosphate contacts are provided by residues Gly214 and 235–236 (GQ).

Belongs to the PNP synthase family. Homooctamer; tetramer of dimers.

It localises to the cytoplasm. The catalysed reaction is 3-amino-2-oxopropyl phosphate + 1-deoxy-D-xylulose 5-phosphate = pyridoxine 5'-phosphate + phosphate + 2 H2O + H(+). It participates in cofactor biosynthesis; pyridoxine 5'-phosphate biosynthesis; pyridoxine 5'-phosphate from D-erythrose 4-phosphate: step 5/5. In terms of biological role, catalyzes the complicated ring closure reaction between the two acyclic compounds 1-deoxy-D-xylulose-5-phosphate (DXP) and 3-amino-2-oxopropyl phosphate (1-amino-acetone-3-phosphate or AAP) to form pyridoxine 5'-phosphate (PNP) and inorganic phosphate. This Aliarcobacter butzleri (strain RM4018) (Arcobacter butzleri) protein is Pyridoxine 5'-phosphate synthase.